Here is a 217-residue protein sequence, read N- to C-terminus: Peptide methionine sulfoxide reductase MsrA (217 aa).

Residue cysteine 54 is part of the active site.

This sequence belongs to the MsrA Met sulfoxide reductase family.

The enzyme catalyses L-methionyl-[protein] + [thioredoxin]-disulfide + H2O = L-methionyl-(S)-S-oxide-[protein] + [thioredoxin]-dithiol. It carries out the reaction [thioredoxin]-disulfide + L-methionine + H2O = L-methionine (S)-S-oxide + [thioredoxin]-dithiol. Its function is as follows. Has an important function as a repair enzyme for proteins that have been inactivated by oxidation. Catalyzes the reversible oxidation-reduction of methionine sulfoxide in proteins to methionine. The protein is Peptide methionine sulfoxide reductase MsrA of Maricaulis maris (strain MCS10) (Caulobacter maris).